A 607-amino-acid chain; its full sequence is V-type proton ATPase catalytic subunit A (607 aa).

246–253 (GAFGCGKT) is a binding site for ATP.

Belongs to the ATPase alpha/beta chains family. As to quaternary structure, V-ATPase is a heteromultimeric enzyme composed of a peripheral catalytic V1 complex (components A to H) attached to an integral membrane V0 proton pore complex (components: a, c, c', c'', d, e, f and VOA1).

Its subcellular location is the vacuole membrane. It catalyses the reaction ATP + H2O + 4 H(+)(in) = ADP + phosphate + 5 H(+)(out). Catalytic subunit of the V1 complex of vacuolar(H+)-ATPase (V-ATPase), a multisubunit enzyme composed of a peripheral complex (V1) that hydrolyzes ATP and a membrane integral complex (V0) that translocates protons. V-ATPase is responsible for acidifying and maintaining the pH of intracellular compartments. The polypeptide is V-type proton ATPase catalytic subunit A (vma-1) (Neurospora crassa (strain ATCC 24698 / 74-OR23-1A / CBS 708.71 / DSM 1257 / FGSC 987)).